A 197-amino-acid polypeptide reads, in one-letter code: TATA-box-binding protein (197 aa).

Repeat copies occupy residues 10–86 (IENI…VKLL) and 101–177 (IQNI…YNQL).

Belongs to the TBP family.

General factor that plays a role in the activation of archaeal genes transcribed by RNA polymerase. Binds specifically to the TATA box promoter element which lies close to the position of transcription initiation. The polypeptide is TATA-box-binding protein (Pyrobaculum neutrophilum (strain DSM 2338 / JCM 9278 / NBRC 100436 / V24Sta) (Thermoproteus neutrophilus)).